Here is a 352-residue protein sequence, read N- to C-terminus: Holliday junction branch migration complex subunit RuvB (352 aa).

Positions 13-201 (FSLRKKELRL…FGISQKIEFY (189 aa)) are large ATPase domain (RuvB-L). ATP-binding positions include arginine 41, glycine 82, lysine 85, threonine 86, threonine 87, 148-150 (EDF), arginine 191, tyrosine 201, and arginine 238. Threonine 86 lines the Mg(2+) pocket. Positions 202–273 (TCDELKQIID…LIKKALNSYQ (72 aa)) are small ATPAse domain (RuvB-S). Residues 276–352 (EKGLDYVDRQ…KYIDSKNDNF (77 aa)) form a head domain (RuvB-H) region. Residues arginine 330 and arginine 335 each contribute to the DNA site.

This sequence belongs to the RuvB family. Homohexamer. Forms an RuvA(8)-RuvB(12)-Holliday junction (HJ) complex. HJ DNA is sandwiched between 2 RuvA tetramers; dsDNA enters through RuvA and exits via RuvB. An RuvB hexamer assembles on each DNA strand where it exits the tetramer. Each RuvB hexamer is contacted by two RuvA subunits (via domain III) on 2 adjacent RuvB subunits; this complex drives branch migration. In the full resolvosome a probable DNA-RuvA(4)-RuvB(12)-RuvC(2) complex forms which resolves the HJ.

It localises to the cytoplasm. It carries out the reaction ATP + H2O = ADP + phosphate + H(+). In terms of biological role, the RuvA-RuvB-RuvC complex processes Holliday junction (HJ) DNA during genetic recombination and DNA repair, while the RuvA-RuvB complex plays an important role in the rescue of blocked DNA replication forks via replication fork reversal (RFR). RuvA specifically binds to HJ cruciform DNA, conferring on it an open structure. The RuvB hexamer acts as an ATP-dependent pump, pulling dsDNA into and through the RuvAB complex. RuvB forms 2 homohexamers on either side of HJ DNA bound by 1 or 2 RuvA tetramers; 4 subunits per hexamer contact DNA at a time. Coordinated motions by a converter formed by DNA-disengaged RuvB subunits stimulates ATP hydrolysis and nucleotide exchange. Immobilization of the converter enables RuvB to convert the ATP-contained energy into a lever motion, pulling 2 nucleotides of DNA out of the RuvA tetramer per ATP hydrolyzed, thus driving DNA branch migration. The RuvB motors rotate together with the DNA substrate, which together with the progressing nucleotide cycle form the mechanistic basis for DNA recombination by continuous HJ branch migration. Branch migration allows RuvC to scan DNA until it finds its consensus sequence, where it cleaves and resolves cruciform DNA. This Prochlorococcus marinus (strain MIT 9312) protein is Holliday junction branch migration complex subunit RuvB.